The chain runs to 222 residues: Probable GTP-binding protein EngB (222 aa).

Positions 22–197 constitute an EngB-type G domain; sequence TSAEIAFVGR…ETVVAGWFAG (176 aa). Residues Ser-37 and Thr-59 each contribute to the Mg(2+) site. Positions 201 to 222 are disordered; the sequence is RQADELTDGEPDDRTPDPDSAS. The span at 212–222 shows a compositional bias: basic and acidic residues; that stretch reads DDRTPDPDSAS.

Belongs to the TRAFAC class TrmE-Era-EngA-EngB-Septin-like GTPase superfamily. EngB GTPase family. Requires Mg(2+) as cofactor.

Necessary for normal cell division and for the maintenance of normal septation. The polypeptide is Probable GTP-binding protein EngB (Laribacter hongkongensis (strain HLHK9)).